Reading from the N-terminus, the 318-residue chain is Aspartate carbamoyltransferase catalytic subunit (318 aa).

Arg58 and Thr59 together coordinate carbamoyl phosphate. Lys86 is an L-aspartate binding site. 3 residues coordinate carbamoyl phosphate: Arg108, His141, and Gln144. L-aspartate-binding residues include Arg174 and Arg226. Carbamoyl phosphate contacts are provided by Gly270 and Pro271.

The protein belongs to the aspartate/ornithine carbamoyltransferase superfamily. ATCase family. As to quaternary structure, heterododecamer (2C3:3R2) of six catalytic PyrB chains organized as two trimers (C3), and six regulatory PyrI chains organized as three dimers (R2).

It catalyses the reaction carbamoyl phosphate + L-aspartate = N-carbamoyl-L-aspartate + phosphate + H(+). It participates in pyrimidine metabolism; UMP biosynthesis via de novo pathway; (S)-dihydroorotate from bicarbonate: step 2/3. Catalyzes the condensation of carbamoyl phosphate and aspartate to form carbamoyl aspartate and inorganic phosphate, the committed step in the de novo pyrimidine nucleotide biosynthesis pathway. The polypeptide is Aspartate carbamoyltransferase catalytic subunit (Lactobacillus acidophilus (strain ATCC 700396 / NCK56 / N2 / NCFM)).